Reading from the N-terminus, the 1023-residue chain is Sodium/potassium-transporting ATPase subunit alpha-1 (1023 aa).

Residues 1 to 5 (MGYGA) constitute a propeptide that is removed on maturation. Basic and acidic residues predominate over residues 1–11 (MGYGAGRDKYE). A disordered region spans residues 1-34 (MGYGAGRDKYEPAATSEHGGKKGKGKGKDRDMEE). Residues 6–87 (GRDKYEPAAT…NALTPPPTTP (82 aa)) are Cytoplasmic-facing. T15 is subject to Phosphothreonine; by PKC. S16 is subject to Phosphoserine; by PKC. The tract at residues 82 to 84 (PPP) is interaction with phosphoinositide-3 kinase. A helical membrane pass occupies residues 88-108 (EWVKFCRQLFGGFSMLLWIGA). Residues 109–131 (ILCFLAYGIRKASDLEPDNDNLY) lie on the Extracellular side of the membrane. A helical transmembrane segment spans residues 132-152 (LGVVLSAVVIITGCFSYYQEA). The Cytoplasmic portion of the chain corresponds to 153–288 (KSSRIMESFK…GGQTPIAVEI (136 aa)). Residues 215 to 235 (NSSLTGESEPQTRSPDFTNEN) are disordered. Residues 289 to 308 (GHFIHIITGVAVFLGVSFFI) form a helical membrane-spanning segment. At 309–320 (LSLILHYTWLEA) the chain is on the extracellular side. The helical transmembrane segment at 321 to 338 (VIFLIGIIVANVPEGLLA) threads the bilayer. Residues 339-772 (TVTVCLTLTA…EEGRLIFDNL (434 aa)) lie on the Cytoplasmic side of the membrane. The active-site 4-aspartylphosphate intermediate is D376. K487 contacts ATP. Mg(2+)-binding residues include D717 and D721. A helical membrane pass occupies residues 773–792 (KKSIAYTLTSNIPEITPFLI). The Extracellular segment spans residues 793–802 (FIIADIPLPL). The chain crosses the membrane as a helical span at residues 803–823 (GTVTILCIDLGTDMVPAISLA). The Cytoplasmic portion of the chain corresponds to 824–843 (YEQAESDIMKRQPRNPKKDK). A helical membrane pass occupies residues 844–866 (LVNERLISMAYGQIGMIQALGGF). Topologically, residues 867–918 (FAYFVILAENGFLPSTLLGIRVAWEDRYVNDVEDSYGQQWTYEQRKIVEFTC) are extracellular. Residues 919–938 (HTAFFVSIVVVQWADLIICK) traverse the membrane as a helical segment. The Cytoplasmic portion of the chain corresponds to 939–951 (TRRNSVFQQGMKN). S943 is subject to Phosphoserine; by PKA. The chain crosses the membrane as a helical span at residues 952–970 (KILIFGLFEETALAAFLSY). Topologically, residues 971-985 (CPGMDVALRMYPLKP) are extracellular. A helical transmembrane segment spans residues 986-1006 (TWWFCAFPYSLLIFIYDEVRK). The Cytoplasmic portion of the chain corresponds to 1007-1023 (LILRRSPGGWVEKETYY).

The protein belongs to the cation transport ATPase (P-type) (TC 3.A.3) family. Type IIC subfamily. The sodium/potassium-transporting ATPase is composed of a catalytic alpha subunit, an auxiliary non-catalytic beta subunit and an additional regulatory subunit. Mainly expressed in kidney. Found in bladder, colon, eye, and testis. Found in low levels in brain, heart, spleen and liver.

It is found in the cell membrane. It localises to the sarcolemma. The enzyme catalyses K(+)(out) + Na(+)(in) + ATP + H2O = K(+)(in) + Na(+)(out) + ADP + phosphate + H(+). Its activity is regulated as follows. This alpha subunit is resistant to ouabain. This is the catalytic component of the active enzyme, which catalyzes the hydrolysis of ATP coupled with the exchange of sodium and potassium ions across the plasma membrane. This action creates the electrochemical gradient of sodium and potassium ions, providing the energy for active transport of various nutrients. This chain is Sodium/potassium-transporting ATPase subunit alpha-1 (ATP1A1), found in Rhinella marina (Cane toad).